A 272-amino-acid polypeptide reads, in one-letter code: Bifunctional protein FolD (272 aa).

NADP(+) contacts are provided by residues 155-157, Ser-182, and Ile-223; that span reads GRS.

This sequence belongs to the tetrahydrofolate dehydrogenase/cyclohydrolase family. In terms of assembly, homodimer.

It carries out the reaction (6R)-5,10-methylene-5,6,7,8-tetrahydrofolate + NADP(+) = (6R)-5,10-methenyltetrahydrofolate + NADPH. The enzyme catalyses (6R)-5,10-methenyltetrahydrofolate + H2O = (6R)-10-formyltetrahydrofolate + H(+). It participates in one-carbon metabolism; tetrahydrofolate interconversion. In terms of biological role, catalyzes the oxidation of 5,10-methylenetetrahydrofolate to 5,10-methenyltetrahydrofolate and then the hydrolysis of 5,10-methenyltetrahydrofolate to 10-formyltetrahydrofolate. The sequence is that of Bifunctional protein FolD from Fervidobacterium nodosum (strain ATCC 35602 / DSM 5306 / Rt17-B1).